We begin with the raw amino-acid sequence, 144 residues long: MGKIPIKRILAIDYGKKRTGLAKTDPFCSFAQPVGTFPPEKIITIIKSFLQENSVEKIIVGYPLNSDGTKNPMTGIIDGFIEELSAAFPDIPVEPIDEHGSSKQAGKVLIESGLSRKKRQRKGRLDSAAACLLLQHYLENTGNA.

It belongs to the YqgF nuclease family.

Its subcellular location is the cytoplasm. In terms of biological role, could be a nuclease involved in processing of the 5'-end of pre-16S rRNA. This chain is Putative pre-16S rRNA nuclease, found in Chlorobium phaeobacteroides (strain BS1).